Reading from the N-terminus, the 424-residue chain is Tyrosine--tRNA ligase (424 aa).

L-tyrosine is bound at residue Tyr-37. The short motif at 42–51 (PTADSLHLGH) is the 'HIGH' region element. Lys-144 is subject to N6-acetyllysine. Residues Tyr-175 and Gln-179 each contribute to the L-tyrosine site. A 'KMSKS' region motif is present at residues 235–239 (KFGKT). Residue Lys-238 participates in ATP binding. An S4 RNA-binding domain is found at 357 to 414 (ADLMQALVDSELQPSRGQARKTIASNAITINGEKQSDPEYFFKEEDRLFGRFTLLRRG).

It belongs to the class-I aminoacyl-tRNA synthetase family. TyrS type 1 subfamily. Homodimer.

The protein localises to the cytoplasm. It carries out the reaction tRNA(Tyr) + L-tyrosine + ATP = L-tyrosyl-tRNA(Tyr) + AMP + diphosphate + H(+). Its function is as follows. Catalyzes the attachment of tyrosine to tRNA(Tyr) in a two-step reaction: tyrosine is first activated by ATP to form Tyr-AMP and then transferred to the acceptor end of tRNA(Tyr). In Shigella boydii serotype 4 (strain Sb227), this protein is Tyrosine--tRNA ligase.